A 100-amino-acid polypeptide reads, in one-letter code: Small ribosomal subunit protein uS14c (100 aa).

This sequence belongs to the universal ribosomal protein uS14 family. As to quaternary structure, part of the 30S ribosomal subunit.

The protein resides in the plastid. The protein localises to the chloroplast. Its function is as follows. Binds 16S rRNA, required for the assembly of 30S particles. The chain is Small ribosomal subunit protein uS14c from Chlorella vulgaris (Green alga).